The following is a 260-amino-acid chain: Factor V activator RVV-V gamma (260 aa).

The N-terminal stretch at 1 to 18 is a signal peptide; sequence MVLIKVLANLLVLQLSYA. The propeptide occupies 19 to 24; sequence QKSSEL. Residues 25-251 enclose the Peptidase S1 domain; sequence VVGGDECNIN…YNNWIQSIIA (227 aa). 6 disulfide bridges follow: C31–C165, C52–C68, C100–C258, C144–C212, C176–C191, and C202–C227. Catalysis depends on charge relay system residues H67 and D112. The Charge relay system role is filled by S206. N253 is a glycosylation site (N-linked (GlcNAc...) asparagine).

Belongs to the peptidase S1 family. Snake venom subfamily. Monomer. Expressed by the venom gland.

Its subcellular location is the secreted. The catalysed reaction is Fully activates human clotting factor V by a single cleavage at the 1545-Trp-Tyr-Leu-Arg-|-Ser-Asn-Asn-Gly-1552 bond. Cattle, but not rabbit, factor V is cleaved, and no other proteins of the clotting system are attacked. Esterase activity is observed on Bz-Arg-OEt and Tos-Arg-OMe, and amidase activity on Phe-pipecolyl-Arg-NHPhNO2.. Functionally, venom serine protease that selectively activates factor V (F5) in a calcium-independent manner. It cleaves the Arg(1545)-Ser(1546) linkage in the human factor V molecule. Induces the coagulation of mammalian plasma. This chain is Factor V activator RVV-V gamma, found in Daboia siamensis (Eastern Russel's viper).